Reading from the N-terminus, the 569-residue chain is 4-coumarate-CoA ligase 2 (569 aa).

The disordered stretch occupies residues 1–24 (MITIAESHPQIHHSPPDTTAPSTP). ATP contacts are provided by residues 216–220 (SSGTT), His-265, 337–339 (AAP), 359–360 (QG), Thr-364, Asp-448, Arg-463, and Lys-554. Positions 290–359 (EMEGMLETIQ…GRLPQAVLGQ (70 aa)) are SBD1. Residues 360–427 (GYGMTEAGPV…VRGPQIMKGY (68 aa)) are SBD2.

Belongs to the ATP-dependent AMP-binding enzyme family. Mostly expressed in stems, and, to a lower extent, in bulbs.

It carries out the reaction (E)-4-coumarate + ATP + CoA = (E)-4-coumaroyl-CoA + AMP + diphosphate. It functions in the pathway phytoalexin biosynthesis; 3,4',5-trihydroxystilbene biosynthesis; 3,4',5-trihydroxystilbene from trans-4-coumarate: step 1/2. Its function is as follows. Produces CoA thioesters of a variety of hydroxy- and methoxy-substituted cinnamic acids, which are used to synthesize several phenylpropanoid-derived compounds, including anthocyanins, flavonoids, isoflavonoids, coumarins, lignin, suberin and wall-bound phenolics. This chain is 4-coumarate-CoA ligase 2, found in Narcissus pseudonarcissus (Daffodil).